Consider the following 280-residue polypeptide: DegV domain-containing protein spyM18_1709 (280 aa).

A DegV domain is found at 3–280 (WKIVTDSGCD…DGGLLMGYEI (278 aa)). Positions 63 and 91 each coordinate hexadecanoate.

May bind long-chain fatty acids, such as palmitate, and may play a role in lipid transport or fatty acid metabolism. This Streptococcus pyogenes serotype M18 (strain MGAS8232) protein is DegV domain-containing protein spyM18_1709.